Reading from the N-terminus, the 384-residue chain is S-adenosylmethionine synthase (384 aa).

His15 serves as a coordination point for ATP. A Mg(2+)-binding site is contributed by Asp17. Glu43 is a binding site for K(+). 2 residues coordinate L-methionine: Glu56 and Gln99. Residues 99-109 are flexible loop; that stretch reads QSPDINQGVDR. Residues 164 to 166, 230 to 231, Asp239, 245 to 246, Ala262, and Lys266 each bind ATP; these read DAK, RF, and RK. Asp239 provides a ligand contact to L-methionine. Position 270 (Lys270) interacts with L-methionine.

This sequence belongs to the AdoMet synthase family. In terms of assembly, homotetramer; dimer of dimers. The cofactor is Mg(2+). Requires K(+) as cofactor.

Its subcellular location is the cytoplasm. The enzyme catalyses L-methionine + ATP + H2O = S-adenosyl-L-methionine + phosphate + diphosphate. The protein operates within amino-acid biosynthesis; S-adenosyl-L-methionine biosynthesis; S-adenosyl-L-methionine from L-methionine: step 1/1. Functionally, catalyzes the formation of S-adenosylmethionine (AdoMet) from methionine and ATP. The overall synthetic reaction is composed of two sequential steps, AdoMet formation and the subsequent tripolyphosphate hydrolysis which occurs prior to release of AdoMet from the enzyme. The polypeptide is S-adenosylmethionine synthase (Erwinia tasmaniensis (strain DSM 17950 / CFBP 7177 / CIP 109463 / NCPPB 4357 / Et1/99)).